We begin with the raw amino-acid sequence, 470 residues long: Annexin C1 (470 aa).

Positions 1 to 143 (MYGQQNNYGA…QGQSPMMYLG (143 aa)) are disordered. Over residues 15-34 (QWGQAPPQGYQPGYQNGPPA) the composition is skewed to low complexity. Residues 82–92 (PQPPFGAPSPA) are compositionally biased toward pro residues. Composition is skewed to low complexity over residues 93–110 (PAGY…YGAP) and 128–138 (GYGSQPQGQSP). Annexin repeat units lie at residues 161–232 (YDAR…LLSL), 233–304 (GPLG…MALS), 316–388 (QLVQ…FIAR), and 395–468 (DGVV…GIIE).

It belongs to the annexin family.

Functionally, does not appear to play a major role in virulence. May play a role in titan cell formation. This Cryptococcus neoformans var. grubii serotype A (strain H99 / ATCC 208821 / CBS 10515 / FGSC 9487) (Filobasidiella neoformans var. grubii) protein is Annexin C1.